Consider the following 650-residue polypeptide: DNA topoisomerase 3 (650 aa).

The Toprim domain maps to 1–134 (MRLFIAEKPS…KLNQIQRCLI (134 aa)). 3 residues coordinate Mg(2+): E7, D103, and D105. The Topo IA-type catalytic domain occupies 155 to 617 (FIPLATSALA…TLTNFLPELM (463 aa)). The interval 194–199 (SVGRVQ) is interaction with DNA. The active-site O-(5'-phospho-DNA)-tyrosine intermediate is Y342.

Belongs to the type IA topoisomerase family. Mg(2+) is required as a cofactor.

The catalysed reaction is ATP-independent breakage of single-stranded DNA, followed by passage and rejoining.. Its function is as follows. Releases the supercoiling and torsional tension of DNA, which is introduced during the DNA replication and transcription, by transiently cleaving and rejoining one strand of the DNA duplex. Introduces a single-strand break via transesterification at a target site in duplex DNA. The scissile phosphodiester is attacked by the catalytic tyrosine of the enzyme, resulting in the formation of a DNA-(5'-phosphotyrosyl)-enzyme intermediate and the expulsion of a 3'-OH DNA strand. The free DNA strand then undergoes passage around the unbroken strand, thus removing DNA supercoils. Finally, in the religation step, the DNA 3'-OH attacks the covalent intermediate to expel the active-site tyrosine and restore the DNA phosphodiester backbone. In Pasteurella multocida (strain Pm70), this protein is DNA topoisomerase 3.